The sequence spans 177 residues: Adenine phosphoribosyltransferase (177 aa).

The protein belongs to the purine/pyrimidine phosphoribosyltransferase family. As to quaternary structure, homodimer.

It is found in the cytoplasm. The enzyme catalyses AMP + diphosphate = 5-phospho-alpha-D-ribose 1-diphosphate + adenine. Its pathway is purine metabolism; AMP biosynthesis via salvage pathway; AMP from adenine: step 1/1. Its function is as follows. Catalyzes a salvage reaction resulting in the formation of AMP, that is energically less costly than de novo synthesis. This Chlorobium phaeobacteroides (strain DSM 266 / SMG 266 / 2430) protein is Adenine phosphoribosyltransferase.